The chain runs to 145 residues: MEAILKSIMLLKYLQFIIIFCSGLCMALVICTKAKSGKGTNTAKSSGGNNGTNLNAKRSNTTQDDVKFNLNIKNTEQKRDEFDDDEENPLAKIPTKARLPKKDTLSKTSSNSKMDREASYFAPNEKQTGKSCYMSTAMSTTKTTT.

A disordered region spans residues 37-123 (GKGTNTAKSS…MDREASYFAP (87 aa)). Residues 38 to 63 (KGTNTAKSSGGNNGTNLNAKRSNTTQ) show a composition bias toward polar residues.

This is an uncharacterized protein from Caenorhabditis elegans.